A 1349-amino-acid polypeptide reads, in one-letter code: ABC multidrug transporter mdr1 (1349 aa).

The tract at residues 1–62 (MPAPETGASS…PDGKQKDHGK (62 aa)) is disordered. Residues 35 to 45 (DNEKPHDHHSL) show a composition bias toward basic and acidic residues. The next 4 membrane-spanning stretches (helical) occupy residues 108-128 (ILII…LPLF), 162-182 (YFVY…VGFI), 234-254 (KVGL…VAYV), and 257-277 (WKLA…MGGG). One can recognise an ABC transmembrane type-1 1 domain in the interval 112–402 (LVSAICAIAA…VAPNGQAFTN (291 aa)). An N-linked (GlcNAc...) asparagine glycan is attached at Asn308. 2 consecutive transmembrane segments (helical) span residues 339 to 359 (ILGM…GLGF) and 371 to 391 (VNVG…FSLG). The ABC transporter 1 domain maps to 437 to 682 (IEFRNVKHIY…KGTYYKLVEA (246 aa)). 472–479 (GPSGSGKS) contributes to the ATP binding site. Transmembrane regions (helical) follow at residues 779 to 799 (MLIG…QAFL) and 828 to 848 (FFVV…AFAI). The region spanning 780–1069 (LIGLTFSFLA…VFSFAPDMGK (290 aa)) is the ABC transmembrane type-1 2 domain. N-linked (GlcNAc...) asparagine glycosylation is found at Asn878 and Asn893. 4 consecutive transmembrane segments (helical) span residues 896–916 (GVSG…GAAM), 926–948 (LALV…FYML), 1016–1036 (ALVF…LGHH), and 1043–1063 (FFVC…VFSF). Positions 1104-1342 (IEFRDVHFRY…KGRYYELVNL (239 aa)) constitute an ABC transporter 2 domain. A glycan (N-linked (GlcNAc...) asparagine) is linked at Asn1126. Position 1139–1146 (1139–1146 (GPSGCGKS)) interacts with ATP.

Belongs to the ABC transporter superfamily. ABCB family. Multidrug resistance exporter (TC 3.A.1.201) subfamily.

It is found in the cell membrane. It carries out the reaction voriconazole(in) + ATP + H2O = voriconazole(out) + ADP + phosphate + H(+). Pleiotropic ABC efflux transporter that may be involved in A.fumigatus adaptation to azoles such as vorizonazole. This chain is ABC multidrug transporter mdr1, found in Aspergillus fumigatus (strain ATCC MYA-4609 / CBS 101355 / FGSC A1100 / Af293) (Neosartorya fumigata).